The primary structure comprises 121 residues: Small ribosomal subunit protein uS13 (121 aa).

The disordered stretch occupies residues 89-121; it reads RRHRMSLPVRGQRTRTNARTRRGSRKTVAGRKK. The segment covering 100–121 has biased composition (basic residues); the sequence is QRTRTNARTRRGSRKTVAGRKK.

Belongs to the universal ribosomal protein uS13 family. In terms of assembly, part of the 30S ribosomal subunit. Forms a loose heterodimer with protein S19. Forms two bridges to the 50S subunit in the 70S ribosome.

Functionally, located at the top of the head of the 30S subunit, it contacts several helices of the 16S rRNA. In the 70S ribosome it contacts the 23S rRNA (bridge B1a) and protein L5 of the 50S subunit (bridge B1b), connecting the 2 subunits; these bridges are implicated in subunit movement. Contacts the tRNAs in the A and P-sites. The sequence is that of Small ribosomal subunit protein uS13 from Prochlorococcus marinus subsp. pastoris (strain CCMP1986 / NIES-2087 / MED4).